A 94-amino-acid polypeptide reads, in one-letter code: Immune protein Tsi6 (94 aa).

In terms of biological role, immunity protein that plays a role in preventing early activation of toxin Tse6. This Pseudomonas aeruginosa (strain ATCC 15692 / DSM 22644 / CIP 104116 / JCM 14847 / LMG 12228 / 1C / PRS 101 / PAO1) protein is Immune protein Tsi6.